Consider the following 1375-residue polypeptide: DNA-directed RNA polymerase subunit beta (1375 aa).

The protein belongs to the RNA polymerase beta chain family. In terms of assembly, the RNAP catalytic core consists of 2 alpha, 1 beta, 1 beta' and 1 omega subunit. When a sigma factor is associated with the core the holoenzyme is formed, which can initiate transcription.

The enzyme catalyses RNA(n) + a ribonucleoside 5'-triphosphate = RNA(n+1) + diphosphate. Functionally, DNA-dependent RNA polymerase catalyzes the transcription of DNA into RNA using the four ribonucleoside triphosphates as substrates. The sequence is that of DNA-directed RNA polymerase subunit beta from Coxiella burnetii (strain CbuG_Q212) (Coxiella burnetii (strain Q212)).